Consider the following 146-residue polypeptide: Universal stress protein MTH_1154 (146 aa).

Belongs to the universal stress protein A family.

The protein is Universal stress protein MTH_1154 of Methanothermobacter thermautotrophicus (strain ATCC 29096 / DSM 1053 / JCM 10044 / NBRC 100330 / Delta H) (Methanobacterium thermoautotrophicum).